Consider the following 434-residue polypeptide: Nicotinate phosphoribosyltransferase (434 aa).

His-242 carries the phosphohistidine; by autocatalysis modification.

This sequence belongs to the NAPRTase family. Post-translationally, transiently phosphorylated on a His residue during the reaction cycle. Phosphorylation strongly increases the affinity for substrates and increases the rate of nicotinate D-ribonucleotide production. Dephosphorylation regenerates the low-affinity form of the enzyme, leading to product release.

It catalyses the reaction nicotinate + 5-phospho-alpha-D-ribose 1-diphosphate + ATP + H2O = nicotinate beta-D-ribonucleotide + ADP + phosphate + diphosphate. It functions in the pathway cofactor biosynthesis; NAD(+) biosynthesis; nicotinate D-ribonucleotide from nicotinate: step 1/1. Functionally, catalyzes the synthesis of beta-nicotinate D-ribonucleotide from nicotinate and 5-phospho-D-ribose 1-phosphate at the expense of ATP. In Rhizobium etli (strain CIAT 652), this protein is Nicotinate phosphoribosyltransferase.